The following is a 468-amino-acid chain: Cysteine--tRNA ligase (468 aa).

Cysteine 27 serves as a coordination point for Zn(2+). The 'HIGH' region signature appears at 29 to 39; sequence PTVYDDAHLGH. Zn(2+) contacts are provided by cysteine 204, histidine 234, and glutamate 238. A 'KMSKS' region motif is present at residues 266-270; that stretch reads KMSKS. Residue lysine 269 coordinates ATP.

The protein belongs to the class-I aminoacyl-tRNA synthetase family. As to quaternary structure, monomer. The cofactor is Zn(2+).

The protein localises to the cytoplasm. The enzyme catalyses tRNA(Cys) + L-cysteine + ATP = L-cysteinyl-tRNA(Cys) + AMP + diphosphate. In Campylobacter hominis (strain ATCC BAA-381 / DSM 21671 / CCUG 45161 / LMG 19568 / NCTC 13146 / CH001A), this protein is Cysteine--tRNA ligase.